The sequence spans 319 residues: Cytochrome c biogenesis protein CcsA (319 aa).

The next 7 membrane-spanning stretches (helical) occupy residues 9–29 (ILTHISFSLVSIGITIFLITL), 44–64 (GVIGTFLCITGLLVTRWAYSG), 71–91 (LYESLLFLSWSFAIIHMFPYL), 143–163 (MVLGYAALLCGSLLSVALLVI), 225–245 (IISLGFIFLTIGILSGAVWAN), 259–273 (TWAFITWTMFAIYLH), and 286–306 (AIVAFLGFIIIWICYFGVNLL).

Belongs to the CcmF/CycK/Ccl1/NrfE/CcsA family. In terms of assembly, may interact with Ccs1.

It is found in the plastid. The protein resides in the chloroplast thylakoid membrane. In terms of biological role, required during biogenesis of c-type cytochromes (cytochrome c6 and cytochrome f) at the step of heme attachment. This Oenothera argillicola (Appalachian evening primrose) protein is Cytochrome c biogenesis protein CcsA.